A 252-amino-acid polypeptide reads, in one-letter code: Serine/threonine phosphatase stp (252 aa).

Basic and acidic residues predominate over residues 1–18 (MHAEFRTDRGRIRHHNED). Positions 1-23 (MHAEFRTDRGRIRHHNEDNGGVF) are disordered. The region spanning 2–242 (HAEFRTDRGR…DNITVLLVER (241 aa)) is the PPM-type phosphatase domain. Residues D36, G37, D194, and D233 each contribute to the Mn(2+) site.

It belongs to the PP2C family. The cofactor is Mn(2+).

Its subcellular location is the cytoplasm. It localises to the membrane. It carries out the reaction O-phospho-L-seryl-[protein] + H2O = L-seryl-[protein] + phosphate. The enzyme catalyses O-phospho-L-threonyl-[protein] + H2O = L-threonyl-[protein] + phosphate. Its function is as follows. Protein phosphatase that dephosphorylates EF-Tu. The sequence is that of Serine/threonine phosphatase stp (stp) from Listeria monocytogenes serotype 4b (strain F2365).